The following is a 93-amino-acid chain: CRISPR-associated endoribonuclease Cas2 3 (93 aa).

Asp10 contacts Mg(2+).

This sequence belongs to the CRISPR-associated endoribonuclease Cas2 protein family. Homodimer, forms a heterotetramer with a Cas1 homodimer. Mg(2+) serves as cofactor.

CRISPR (clustered regularly interspaced short palindromic repeat), is an adaptive immune system that provides protection against mobile genetic elements (viruses, transposable elements and conjugative plasmids). CRISPR clusters contain sequences complementary to antecedent mobile elements and target invading nucleic acids. CRISPR clusters are transcribed and processed into CRISPR RNA (crRNA). Functions as a ssRNA-specific endoribonuclease. Involved in the integration of spacer DNA into the CRISPR cassette. The chain is CRISPR-associated endoribonuclease Cas2 3 from Chloroflexus aurantiacus (strain ATCC 29366 / DSM 635 / J-10-fl).